A 116-amino-acid chain; its full sequence is Large ribosomal subunit protein uL18 (116 aa).

It belongs to the universal ribosomal protein uL18 family. In terms of assembly, part of the 50S ribosomal subunit; part of the 5S rRNA/L5/L18/L25 subcomplex. Contacts the 5S and 23S rRNAs.

This is one of the proteins that bind and probably mediate the attachment of the 5S RNA into the large ribosomal subunit, where it forms part of the central protuberance. The chain is Large ribosomal subunit protein uL18 from Psychrobacter arcticus (strain DSM 17307 / VKM B-2377 / 273-4).